A 124-amino-acid chain; its full sequence is Chorion class high-cysteine HCA protein 12 (124 aa).

A signal peptide spans 1–21 (MFTFALLLLCVQGCLIQNVYG). The tract at residues 22-35 (QCCGCGCGGGCGCG) is left arm. Residues 36-83 (CYGGEGDGNVNVCGELPVCGETLVCGRVPICGGVCFKGPACASGCVSI) are central domain. The right arm (Gly- and Cys-rich tandem repeats) stretch occupies residues 84–124 (CGRCCGCGCGGCGGCGCGCGGCGCGCGGCGGCGCGRRCCCC).

This sequence belongs to the chorion protein family.

Functionally, this protein is one of many from the eggshell of the silk moth. The chain is Chorion class high-cysteine HCA protein 12 from Bombyx mori (Silk moth).